A 521-amino-acid chain; its full sequence is Occludin (521 aa).

Over 1–66 (MSSRPFESPP…KWTSPPGVIR (66 aa)) the chain is Cytoplasmic. The region spanning 60-268 (SPPGVIRILS…IIFFAVKTRR (209 aa)) is the MARVEL domain. Residues 67-89 (ILSMLVIVMCIAIFGCVASTLAW) form a helical membrane-spanning segment. Residues 90 to 134 (DRGYGTGLMGGSIGYPYGSGFGSYGTGYGYGFGYGYGYGGYTDPR) lie on the Extracellular side of the membrane. A helical membrane pass occupies residues 135–159 (AAKGFLLAMVAFCFIAALVIFVTSV). At 160 to 169 (IRSDISRTRR) the chain is on the cytoplasmic side. A helical membrane pass occupies residues 170–194 (YYLTVIILSAFLGVMMFIATIVYIM). Residues 195-242 (GVNPTAQASGSLYSSQIYAMCNQFYASTATGLYMDQYLYHYCVVDPQE) lie on the Extracellular side of the membrane. C215 and C236 form a disulfide bridge. The helical transmembrane segment at 243-264 (AIAIVLGFMVIVAFALIIFFAV) threads the bilayer. Topologically, residues 265–521 (KTRRKMDRYD…MVGDYDRQKT (257 aa)) are cytoplasmic. S301 carries the phosphoserine modification. Residues 301–407 (SAGTQDMPPP…ETDYTTGGES (107 aa)) are disordered. T304 is subject to Phosphothreonine. 3 positions are modified to phosphoserine: S312, S320, and S339. Y367 is subject to Phosphotyrosine. Residues S368 and S369 each carry the phosphoserine modification. Positions 380–389 (APSKGRTGRP) are enriched in basic residues. Basic and acidic residues predominate over residues 390–399 (KRLEQDHYET). Phosphotyrosine is present on residues Y397 and Y401. T402 and T403 each carry phosphothreonine; by PKC/PRKCH. S407 is modified (phosphoserine). An OCEL domain is found at 413–521 (EDWIREYPPI…MVGDYDRQKT (109 aa)). The stretch at 424 to 488 (SDQQRQLYKR…EYNRLKQVKG (65 aa)) forms a coiled coil. The residue at position 489 (S489) is a Phosphoserine.

This sequence belongs to the ELL/occludin family. As to quaternary structure, interacts with TJP1/ZO1. Interacts with VAPA. Interacts with CLDN1, CLDN6, CLDN9, CLDN11, CLDN12 and CLDN17. Interacts with PLSCR1. Interacts with LSR, ILDR1 and ILDR2. Interacts with TJP2/ZO2. Post-translationally, dephosphorylated by PTPRJ. Less-phosphorylated forms are found in basolateral membrane, cytosol and tight junction. More-heavily phosphorylated forms are concentrated exclusively in tight junction. In terms of tissue distribution, localized at tight junctions of both epithelial and endothelial cells.

It localises to the cell membrane. The protein resides in the cell junction. Its subcellular location is the tight junction. In terms of biological role, may play a role in the formation and regulation of the tight junction (TJ) paracellular permeability barrier. Interacts with ZO-1. The protein is Occludin (OCLN) of Canis lupus familiaris (Dog).